A 559-amino-acid polypeptide reads, in one-letter code: Chaperonin GroEL 3 (559 aa).

ATP contacts are provided by residues aspartate 88–threonine 92, glycine 426, and aspartate 507.

The protein belongs to the chaperonin (HSP60) family. As to quaternary structure, forms a cylinder of 14 subunits composed of two heptameric rings stacked back-to-back. Interacts with the co-chaperonin GroES.

The protein localises to the cytoplasm. The enzyme catalyses ATP + H2O + a folded polypeptide = ADP + phosphate + an unfolded polypeptide.. Together with its co-chaperonin GroES, plays an essential role in assisting protein folding. The GroEL-GroES system forms a nano-cage that allows encapsulation of the non-native substrate proteins and provides a physical environment optimized to promote and accelerate protein folding. The chain is Chaperonin GroEL 3 from Methylococcus capsulatus (strain ATCC 33009 / NCIMB 11132 / Bath).